Consider the following 102-residue polypeptide: Small ribosomal subunit protein uS10 (102 aa).

The protein belongs to the universal ribosomal protein uS10 family. In terms of assembly, part of the 30S ribosomal subunit.

Functionally, involved in the binding of tRNA to the ribosomes. The protein is Small ribosomal subunit protein uS10 of Gluconobacter oxydans (strain 621H) (Gluconobacter suboxydans).